A 386-amino-acid chain; its full sequence is Protein lin-8 (386 aa).

Residues 175–285 (LGLEARRASK…FSQQYGGGGS (111 aa)) form a sufficient for interaction with lin-35 region. The disordered stretch occupies residues 212–240 (EEPYEETGSNWSDPAPEPSQSKSQSPEAK). Positions 229 to 240 (PSQSKSQSPEAK) are enriched in low complexity.

It belongs to the lin-8 family. As to quaternary structure, interacts with lin-35 (via C-terminus). As to expression, widely expressed throughout development, with particularly prominent expression in the germline and in neuronal nuclei of the head (at protein level).

The protein resides in the nucleus. Acts as a synthetic multivulva class A (synMuvA) protein and redundantly inhibits lin-3/EGF expression to prevent inappropriate vulva induction. This is Protein lin-8 from Caenorhabditis elegans.